Here is a 572-residue protein sequence, read N- to C-terminus: Proline--tRNA ligase (572 aa).

The protein belongs to the class-II aminoacyl-tRNA synthetase family. ProS type 1 subfamily. In terms of assembly, homodimer.

Its subcellular location is the cytoplasm. The catalysed reaction is tRNA(Pro) + L-proline + ATP = L-prolyl-tRNA(Pro) + AMP + diphosphate. Catalyzes the attachment of proline to tRNA(Pro) in a two-step reaction: proline is first activated by ATP to form Pro-AMP and then transferred to the acceptor end of tRNA(Pro). As ProRS can inadvertently accommodate and process non-cognate amino acids such as alanine and cysteine, to avoid such errors it has two additional distinct editing activities against alanine. One activity is designated as 'pretransfer' editing and involves the tRNA(Pro)-independent hydrolysis of activated Ala-AMP. The other activity is designated 'posttransfer' editing and involves deacylation of mischarged Ala-tRNA(Pro). The misacylated Cys-tRNA(Pro) is not edited by ProRS. This is Proline--tRNA ligase from Salmonella dublin (strain CT_02021853).